A 478-amino-acid chain; its full sequence is ATP synthase subunit beta (478 aa).

ATP is bound at residue 158-165 (GGAGVGKT).

This sequence belongs to the ATPase alpha/beta chains family. As to quaternary structure, F-type ATPases have 2 components, CF(1) - the catalytic core - and CF(0) - the membrane proton channel. CF(1) has five subunits: alpha(3), beta(3), gamma(1), delta(1), epsilon(1). CF(0) has three main subunits: a(1), b(2) and c(9-12). The alpha and beta chains form an alternating ring which encloses part of the gamma chain. CF(1) is attached to CF(0) by a central stalk formed by the gamma and epsilon chains, while a peripheral stalk is formed by the delta and b chains.

The protein localises to the cell inner membrane. It carries out the reaction ATP + H2O + 4 H(+)(in) = ADP + phosphate + 5 H(+)(out). In terms of biological role, produces ATP from ADP in the presence of a proton gradient across the membrane. The catalytic sites are hosted primarily by the beta subunits. This chain is ATP synthase subunit beta, found in Rhizobium johnstonii (strain DSM 114642 / LMG 32736 / 3841) (Rhizobium leguminosarum bv. viciae).